The primary structure comprises 733 residues: Catalase-peroxidase (733 aa).

Residues 1 to 25 (MNEERKCPITGATHKPSAEKGRSNH) form a disordered region. A compositionally biased stretch (basic and acidic residues) spans 16–25 (PSAEKGRSNH). The segment at residues 96-219 (WHSAGTYRTS…LAAVQMGLIY (124 aa)) is a cross-link (tryptophyl-tyrosyl-methioninium (Trp-Tyr) (with M-245)). His97 serves as the catalytic Proton acceptor. The tryptophyl-tyrosyl-methioninium (Tyr-Met) (with W-96) cross-link spans 219–245 (YVNPEGPNGKPDPLAAAKDIRETFARM). His260 lines the heme b pocket.

This sequence belongs to the peroxidase family. Peroxidase/catalase subfamily. Homodimer or homotetramer. It depends on heme b as a cofactor. Formation of the three residue Trp-Tyr-Met cross-link is important for the catalase, but not the peroxidase activity of the enzyme.

It catalyses the reaction H2O2 + AH2 = A + 2 H2O. The catalysed reaction is 2 H2O2 = O2 + 2 H2O. In terms of biological role, bifunctional enzyme with both catalase and broad-spectrum peroxidase activity. The chain is Catalase-peroxidase from Chlorobium chlorochromatii (strain CaD3).